The sequence spans 172 residues: Shikimate kinase (172 aa).

14–19 (GAGKST) is an ATP binding site. Mg(2+) is bound at residue serine 18. Substrate-binding residues include aspartate 36, arginine 60, and glycine 82. Position 120 (arginine 120) interacts with ATP. Arginine 139 contributes to the substrate binding site. An ATP-binding site is contributed by glutamine 156.

It belongs to the shikimate kinase family. Monomer. Mg(2+) is required as a cofactor.

Its subcellular location is the cytoplasm. The catalysed reaction is shikimate + ATP = 3-phosphoshikimate + ADP + H(+). It participates in metabolic intermediate biosynthesis; chorismate biosynthesis; chorismate from D-erythrose 4-phosphate and phosphoenolpyruvate: step 5/7. Functionally, catalyzes the specific phosphorylation of the 3-hydroxyl group of shikimic acid using ATP as a cosubstrate. The chain is Shikimate kinase from Aliivibrio fischeri (strain ATCC 700601 / ES114) (Vibrio fischeri).